Consider the following 277-residue polypeptide: 3-methyl-2-oxobutanoate hydroxymethyltransferase (277 aa).

Residues aspartate 53 and aspartate 96 each coordinate Mg(2+). 3-methyl-2-oxobutanoate-binding positions include aspartate 53–serine 54, aspartate 96, and lysine 126. Glutamate 128 contributes to the Mg(2+) binding site. Catalysis depends on glutamate 195, which acts as the Proton acceptor.

It belongs to the PanB family. In terms of assembly, homodecamer; pentamer of dimers. It depends on Mg(2+) as a cofactor.

It is found in the cytoplasm. It catalyses the reaction 3-methyl-2-oxobutanoate + (6R)-5,10-methylene-5,6,7,8-tetrahydrofolate + H2O = 2-dehydropantoate + (6S)-5,6,7,8-tetrahydrofolate. It functions in the pathway cofactor biosynthesis; (R)-pantothenate biosynthesis; (R)-pantoate from 3-methyl-2-oxobutanoate: step 1/2. Functionally, catalyzes the reversible reaction in which hydroxymethyl group from 5,10-methylenetetrahydrofolate is transferred onto alpha-ketoisovalerate to form ketopantoate. The chain is 3-methyl-2-oxobutanoate hydroxymethyltransferase from Chlorobium luteolum (strain DSM 273 / BCRC 81028 / 2530) (Pelodictyon luteolum).